Reading from the N-terminus, the 69-residue chain is NAD(P)H-quinone oxidoreductase subunit L (69 aa).

2 helical membrane-spanning segments follow: residues 5 to 25 (LILL…ITYF) and 40 to 60 (GFMY…SPFL).

Belongs to the complex I NdhL subunit family. NDH-1 can be composed of about 15 different subunits; different subcomplexes with different compositions have been identified which probably have different functions.

It localises to the cellular thylakoid membrane. The catalysed reaction is a plastoquinone + NADH + (n+1) H(+)(in) = a plastoquinol + NAD(+) + n H(+)(out). The enzyme catalyses a plastoquinone + NADPH + (n+1) H(+)(in) = a plastoquinol + NADP(+) + n H(+)(out). NDH-1 shuttles electrons from an unknown electron donor, via FMN and iron-sulfur (Fe-S) centers, to quinones in the respiratory and/or the photosynthetic chain. The immediate electron acceptor for the enzyme in this species is believed to be plastoquinone. Couples the redox reaction to proton translocation, and thus conserves the redox energy in a proton gradient. Cyanobacterial NDH-1 also plays a role in inorganic carbon-concentration. This is NAD(P)H-quinone oxidoreductase subunit L from Acaryochloris marina (strain MBIC 11017).